The primary structure comprises 120 residues: NAD(P)H-quinone oxidoreductase subunit 3 (120 aa).

3 helical membrane passes run 2-22 (FVLS…LVPI), 64-84 (MFAL…PWAV), and 89-109 (LGLL…IALV).

The protein belongs to the complex I subunit 3 family. As to quaternary structure, NDH-1 can be composed of about 15 different subunits; different subcomplexes with different compositions have been identified which probably have different functions.

Its subcellular location is the cellular thylakoid membrane. It carries out the reaction a plastoquinone + NADH + (n+1) H(+)(in) = a plastoquinol + NAD(+) + n H(+)(out). It catalyses the reaction a plastoquinone + NADPH + (n+1) H(+)(in) = a plastoquinol + NADP(+) + n H(+)(out). Its function is as follows. NDH-1 shuttles electrons from an unknown electron donor, via FMN and iron-sulfur (Fe-S) centers, to quinones in the respiratory and/or the photosynthetic chain. The immediate electron acceptor for the enzyme in this species is believed to be plastoquinone. Couples the redox reaction to proton translocation, and thus conserves the redox energy in a proton gradient. Cyanobacterial NDH-1 also plays a role in inorganic carbon-concentration. This chain is NAD(P)H-quinone oxidoreductase subunit 3, found in Picosynechococcus sp. (strain ATCC 27264 / PCC 7002 / PR-6) (Agmenellum quadruplicatum).